The following is a 336-amino-acid chain: Protein YIPF3 (336 aa).

The tract at residues 1–73 (MSAPGGGRSG…AGAGGEEDGE (73 aa)) is disordered. Topologically, residues 1–143 (MSAPGGGRSG…PVKMINFPQK (143 aa)) are cytoplasmic. A compositionally biased stretch (acidic residues) spans 55–73 (EEEEEAEGEAGAGGEEDGE). Residues 144–164 (IAGELYGPLMLVFTLVAILLH) traverse the membrane as a helical segment. Over 165-182 (GMKTSDTIIREGTLMGTA) the chain is Lumenal. The helical transmembrane segment at 183–203 (IGTCFGYWLGVSSFIYFLAYL) threads the bilayer. Over 204–209 (CNAQIT) the chain is Cytoplasmic. Residues 210–230 (MVQMLSLLGYGLFGHCITLLV) form a helical membrane-spanning segment. Topologically, residues 231–239 (TYNIHFHSL) are lumenal. A helical transmembrane segment spans residues 240-260 (FYIFWLVVGGLSTLRMVAVLV). At 261-269 (SRTVGHTQR) the chain is on the cytoplasmic side. Residues 270 to 290 (LILCGTLAALHMLFLLYLHFA) form a helical membrane-spanning segment. Residues 291 to 336 (YHKVVEGILDTLEGPNMPPFQRVARDIPVVSNAVLNTTAKANAMTL) lie on the Lumenal side of the membrane. Asn-326 carries an N-linked (GlcNAc...) asparagine glycan.

Belongs to the YIP1 family.

It localises to the cell membrane. Its subcellular location is the golgi apparatus. The protein localises to the cis-Golgi network membrane. The protein resides in the cytoplasm. Functionally, involved in the maintenance of the Golgi structure. May play a role in hematopoiesis. The sequence is that of Protein YIPF3 (YIPF3) from Gallus gallus (Chicken).